Reading from the N-terminus, the 118-residue chain is Non-specific lipid-transfer protein A (118 aa).

Positions 1-25 (MAGVMKLACLVLACMIVAGPITANR) are cleaved as a signal peptide. Cystine bridges form between Cys29–Cys76, Cys39–Cys53, Cys54–Cys100, and Cys74–Cys114.

The protein belongs to the plant LTP family.

Its function is as follows. Plant non-specific lipid-transfer proteins transfer phospholipids as well as galactolipids across membranes. May play a role in wax or cutin deposition in the cell walls of expanding epidermal cells and certain secretory tissues. This chain is Non-specific lipid-transfer protein A (WAX9A), found in Brassica oleracea var. italica (Broccoli).